Reading from the N-terminus, the 51-residue chain is Insulin-1 (51 aa).

Disulfide bonds link Cys-8-Cys-37, Cys-20-Cys-50, and Cys-36-Cys-41.

This sequence belongs to the insulin family. In terms of assembly, heterodimer of a B chain and an A chain linked by two disulfide bonds.

It is found in the secreted. Functionally, insulin decreases blood glucose concentration. It increases cell permeability to monosaccharides, amino acids and fatty acids. It accelerates glycolysis, the pentose phosphate cycle, and glycogen synthesis in liver. The chain is Insulin-1 (ins1) from Batrachoididae sp. (Toadfish).